The chain runs to 888 residues: Alanine--tRNA ligase (888 aa).

Residues H573, H577, C676, and H680 each contribute to the Zn(2+) site.

It belongs to the class-II aminoacyl-tRNA synthetase family. It depends on Zn(2+) as a cofactor.

It localises to the cytoplasm. It catalyses the reaction tRNA(Ala) + L-alanine + ATP = L-alanyl-tRNA(Ala) + AMP + diphosphate. Functionally, catalyzes the attachment of alanine to tRNA(Ala) in a two-step reaction: alanine is first activated by ATP to form Ala-AMP and then transferred to the acceptor end of tRNA(Ala). Also edits incorrectly charged Ser-tRNA(Ala) and Gly-tRNA(Ala) via its editing domain. The protein is Alanine--tRNA ligase of Corynebacterium diphtheriae (strain ATCC 700971 / NCTC 13129 / Biotype gravis).